Here is a 219-residue protein sequence, read N- to C-terminus: Proteasome subunit beta (219 aa).

Residues methionine 1–glycine 14 constitute a propeptide, removed in mature form; by autocatalysis. Catalysis depends on threonine 15, which acts as the Nucleophile.

The protein belongs to the peptidase T1B family. As to quaternary structure, the 20S proteasome core is composed of 14 alpha and 14 beta subunits that assemble into four stacked heptameric rings, resulting in a barrel-shaped structure. The two inner rings, each composed of seven catalytic beta subunits, are sandwiched by two outer rings, each composed of seven alpha subunits. The catalytic chamber with the active sites is on the inside of the barrel. Has a gated structure, the ends of the cylinder being occluded by the N-termini of the alpha-subunits. Is capped at one or both ends by the proteasome regulatory ATPase, PAN.

The protein resides in the cytoplasm. The enzyme catalyses Cleavage of peptide bonds with very broad specificity.. With respect to regulation, the formation of the proteasomal ATPase PAN-20S proteasome complex, via the docking of the C-termini of PAN into the intersubunit pockets in the alpha-rings, triggers opening of the gate for substrate entry. Interconversion between the open-gate and close-gate conformations leads to a dynamic regulation of the 20S proteasome proteolysis activity. Functionally, component of the proteasome core, a large protease complex with broad specificity involved in protein degradation. This chain is Proteasome subunit beta, found in Methanococcus vannielii (strain ATCC 35089 / DSM 1224 / JCM 13029 / OCM 148 / SB).